We begin with the raw amino-acid sequence, 106 residues long: Small ribosomal subunit protein uS10 (106 aa).

It belongs to the universal ribosomal protein uS10 family. Part of the 30S ribosomal subunit.

Involved in the binding of tRNA to the ribosomes. The polypeptide is Small ribosomal subunit protein uS10 (Prochlorococcus marinus (strain MIT 9211)).